The sequence spans 617 residues: Electron transfer flavoprotein-ubiquinone oxidoreductase, mitochondrial (617 aa).

The N-terminal 33 residues, 1 to 33 (MQVLLARLACPVYQCFHAIKIKKNYLPLCATRW), are a transit peptide targeting the mitochondrion. 71–85 (VVIVGAGPAGLSAAA) lines the FAD pocket. N6-acetyllysine is present on Lys96. Residues 109 to 130 (IGAHTLSGACLDPRALQELFPD) lie within the membrane without spanning it. N6-acetyllysine occurs at positions 132 and 223. Residues Gly305 and Gly306 each coordinate a ubiquinone. At Lys357 the chain carries N6-acetyllysine. Residues 428–447 (IGLDVTEYEDNLKKSWVWKE) lie within the membrane without spanning it. Ser551 is modified (phosphoserine). The [4Fe-4S] cluster site is built by Cys561, Cys586, Cys589, and Cys592. Residues 577–606 (FRLQINAQNCVHCKTCDIKDPSQNINWVVP) enclose the 4Fe-4S ferredoxin-type domain.

The protein belongs to the ETF-QO/FixC family. In terms of assembly, monomer. It depends on [4Fe-4S] cluster as a cofactor. The cofactor is FAD.

It localises to the mitochondrion inner membrane. It carries out the reaction a ubiquinone + reduced [electron-transfer flavoprotein] = a ubiquinol + oxidized [electron-transfer flavoprotein] + H(+). Functionally, accepts electrons from ETF and reduces ubiquinone. This chain is Electron transfer flavoprotein-ubiquinone oxidoreductase, mitochondrial (ETFDH), found in Bos taurus (Bovine).